The primary structure comprises 885 residues: Dipeptidyl peptidase 9 (885 aa).

Catalysis depends on charge relay system residues S752, D830, and H862. S752 is a Val-boroPro binding site.

It belongs to the peptidase S9B family. DPPIV subfamily. In terms of assembly, homodimer. Forms a ternary complex with NLRP1, composed of a DPP9 homodimer, one full-length NLRP1 protein, and one cleaved C-terminus of NLRP1 (NACHT, LRR and PYD domains-containing protein 1, C-terminus).

The protein resides in the nucleus. It catalyses the reaction Release of an N-terminal dipeptide, Xaa-Yaa-|-Zaa-, from a polypeptide, preferentially when Yaa is Pro, provided Zaa is neither Pro nor hydroxyproline.. Functionally, dipeptidyl peptidase that cleaves off N-terminal dipeptides from proteins having a Pro or Ala residue at position 2. Acts as a key inhibitor of the NLRP1 inflammasome. This is Dipeptidyl peptidase 9 from Danio rerio (Zebrafish).